Consider the following 303-residue polypeptide: Probable 5-dehydro-4-deoxyglucarate dehydratase (303 aa).

It belongs to the DapA family.

The enzyme catalyses 5-dehydro-4-deoxy-D-glucarate + H(+) = 2,5-dioxopentanoate + CO2 + H2O. It participates in carbohydrate acid metabolism; D-glucarate degradation; 2,5-dioxopentanoate from D-glucarate: step 2/2. This is Probable 5-dehydro-4-deoxyglucarate dehydratase from Pseudomonas savastanoi pv. phaseolicola (strain 1448A / Race 6) (Pseudomonas syringae pv. phaseolicola (strain 1448A / Race 6)).